We begin with the raw amino-acid sequence, 163 residues long: Cyanate hydratase (163 aa).

Residues arginine 103, glutamate 106, and serine 129 contribute to the active site.

Belongs to the cyanase family.

The enzyme catalyses cyanate + hydrogencarbonate + 3 H(+) = NH4(+) + 2 CO2. Catalyzes the reaction of cyanate with bicarbonate to produce ammonia and carbon dioxide. The sequence is that of Cyanate hydratase from Paracoccidioides brasiliensis (strain Pb18).